A 592-amino-acid polypeptide reads, in one-letter code: Arginine--tRNA ligase (592 aa).

The 'HIGH' region signature appears at 128 to 138 (ANPTGPLHVGH).

This sequence belongs to the class-I aminoacyl-tRNA synthetase family. As to quaternary structure, monomer.

The protein resides in the cytoplasm. The catalysed reaction is tRNA(Arg) + L-arginine + ATP = L-arginyl-tRNA(Arg) + AMP + diphosphate. This is Arginine--tRNA ligase from Hydrogenovibrio crunogenus (strain DSM 25203 / XCL-2) (Thiomicrospira crunogena).